We begin with the raw amino-acid sequence, 182 residues long: tRNA-splicing endonuclease (182 aa).

Residues tyrosine 119, histidine 127, and lysine 158 contribute to the active site.

Belongs to the tRNA-intron endonuclease family. Archaeal short subfamily. Homotetramer; although the tetramer contains four active sites, only two participate in the cleavage. Therefore, it should be considered as a dimer of dimers.

The enzyme catalyses pretRNA = a 3'-half-tRNA molecule with a 5'-OH end + a 5'-half-tRNA molecule with a 2',3'-cyclic phosphate end + an intron with a 2',3'-cyclic phosphate and a 5'-hydroxyl terminus.. In terms of biological role, endonuclease that removes tRNA introns. Cleaves pre-tRNA at the 5'- and 3'-splice sites to release the intron. The products are an intron and two tRNA half-molecules bearing 2',3' cyclic phosphate and 5'-OH termini. Recognizes a pseudosymmetric substrate in which 2 bulged loops of 3 bases are separated by a stem of 4 bp. The sequence is that of tRNA-splicing endonuclease from Saccharolobus islandicus (strain L.S.2.15 / Lassen #1) (Sulfolobus islandicus).